Reading from the N-terminus, the 2320-residue chain is Bromodomain and WD repeat-containing protein 1 (2320 aa).

WD repeat units lie at residues 184 to 223 (GHLS…LLST), 226 to 265 (GHSA…PVAV), 268 to 311 (GHTG…LKFS), 322 to 365 (RPGV…AELE), 366 to 405 (SHTD…WRSI), 424 to 463 (FMKP…LLHN), 466 to 506 (GHAD…KMKH), and 514 to 553 (QGHG…PYEK). Residues 668–691 (QRMGADQDTIPRGLSNGEETPRRG) form a disordered region. Thr687 is subject to Phosphothreonine. Phosphoserine occurs at positions 696, 701, and 710. Disordered stretches follow at residues 809 to 867 (NRSW…RYSD) and 895 to 925 (SEDE…ENLR). Composition is skewed to low complexity over residues 814-824 (ELSSGNESSSS) and 854-867 (YSES…RYSD). Residues 907 to 918 (PKRRRKRKKENK) are compositionally biased toward basic residues. A Bromo 1 domain is found at 1157–1264 (WGQKSRDEEC…DQLLKFIKNQ (108 aa)). The tract at residues 1271-1304 (ELSNTSENDEQNAEDLDDSDLPKTSSGRRRVHDG) is disordered. The segment covering 1277-1289 (ENDEQNAEDLDDS) has biased composition (acidic residues). At Ser1289 the chain carries Phosphoserine. A Bromo 2 domain is found at 1313–1418 (YVESNWKKQC…ALFEEKMKKI (106 aa)). Residues 1434–1593 (RSQRFKQRQN…TGPVSLANGC (160 aa)) are disordered. Residues 1443–1454 (NCKGDSQPNKSI) are compositionally biased toward polar residues. Over residues 1455 to 1464 (RNLKPKRLKS) the composition is skewed to basic residues. Ser1475 bears the Phosphoserine mark. Residues 1475 to 1496 (SPTQSTSSRTAYLGTHKTSAGI) are compositionally biased toward polar residues. Thr1477 carries the post-translational modification Phosphothreonine. Phosphoserine is present on Ser1479. A compositionally biased stretch (low complexity) spans 1497-1509 (SSGVTSGDSSDSA). Positions 1520–1529 (PITNGSTLSE) are enriched in polar residues. Residues 1535–1548 (SLATSLSSSASSSS) show a composition bias toward low complexity. Residues 1549–1561 (EESKESSRARESS) show a composition bias toward basic and acidic residues. Ser1605, Ser1607, Ser1678, Ser1683, and Ser1686 each carry phosphoserine. Disordered regions lie at residues 1670 to 1805 (ARKK…KYNT), 1817 to 1839 (KILS…KCHK), and 1862 to 1899 (DHGC…KISR). The span at 1676–1687 (HNSEDEQSLKSE) shows a compositional bias: basic and acidic residues. A compositionally biased stretch (polar residues) spans 1701-1712 (PVSSSHTAQSNV). Composition is skewed to basic and acidic residues over residues 1715–1728 (SENR…DLRV) and 1751–1769 (LKIE…DHAC). Phosphoserine occurs at positions 1755, 1756, 1786, 1788, 1793, and 1820. Acidic residues predominate over residues 1821 to 1832 (DSEDSESEEQDR). A Phosphothreonine modification is found at Thr1867. 6 positions are modified to phosphoserine: Ser1871, Ser1904, Ser1905, Ser1907, Ser1910, and Ser1943. A Phosphothreonine modification is found at Thr1955. Disordered regions lie at residues 2014–2077 (LNGD…TLAQ) and 2112–2184 (TKVI…TKGK). Residues Ser2018, Ser2020, and Ser2052 each carry the phosphoserine modification. 2 stretches are compositionally biased toward basic and acidic residues: residues 2054 to 2069 (EDSK…DRTF) and 2114 to 2139 (VIHD…ENVK). Positions 2140 to 2165 (ISETTGNSKFRPDTSSKSSDLGSVTE) are enriched in polar residues. Thr2164 is subject to Phosphothreonine. A phosphoserine mark is found at Ser2166 and Val2214.

In terms of assembly, interacts with SMARCA4. In terms of tissue distribution, ubiquitously expressed. Expressed in respiratory epithelial cells and testis spermatozoa.

The protein localises to the cytoplasm. Its subcellular location is the nucleus. The protein resides in the cell projection. It is found in the cilium membrane. It localises to the cytoskeleton. The protein localises to the flagellum axoneme. In terms of biological role, may be a transcriptional activator. May be involved in chromatin remodeling. Plays a role in the regulation of cell morphology and cytoskeletal organization. Required in the control of cell shape. The sequence is that of Bromodomain and WD repeat-containing protein 1 (BRWD1) from Homo sapiens (Human).